Here is a 171-residue protein sequence, read N- to C-terminus: ATP synthase subunit delta (171 aa).

Belongs to the ATPase delta chain family. F-type ATPases have 2 components, F(1) - the catalytic core - and F(0) - the membrane proton channel. F(1) has five subunits: alpha(3), beta(3), gamma(1), delta(1), epsilon(1). F(0) has three main subunits: a(1), b(2) and c(10-14). The alpha and beta chains form an alternating ring which encloses part of the gamma chain. F(1) is attached to F(0) by a central stalk formed by the gamma and epsilon chains, while a peripheral stalk is formed by the delta and b chains.

The protein localises to the cell membrane. Functionally, f(1)F(0) ATP synthase produces ATP from ADP in the presence of a proton or sodium gradient. F-type ATPases consist of two structural domains, F(1) containing the extramembraneous catalytic core and F(0) containing the membrane proton channel, linked together by a central stalk and a peripheral stalk. During catalysis, ATP synthesis in the catalytic domain of F(1) is coupled via a rotary mechanism of the central stalk subunits to proton translocation. Its function is as follows. This protein is part of the stalk that links CF(0) to CF(1). It either transmits conformational changes from CF(0) to CF(1) or is implicated in proton conduction. In Acholeplasma laidlawii (strain PG-8A), this protein is ATP synthase subunit delta.